The sequence spans 100 residues: Noncompact myelin-associated protein (100 aa).

The Extracellular segment spans residues M1 to G28. The helical transmembrane segment at A29 to L49 threads the bilayer. At K50–R100 the chain is on the cytoplasmic side. The tract at residues T58–R100 is disordered.

In terms of processing, glycosylated. As to expression, found in the peripheral nervous system (PNS) Schwann cells (at protein level). Expressed in the PNS, primarily limited to Schwann cells.

It localises to the cell membrane. In terms of biological role, plays a role in myelin formation. This Mus musculus (Mouse) protein is Noncompact myelin-associated protein (Ncmap).